Consider the following 447-residue polypeptide: Hydroxymethylglutaryl-CoA synthase (447 aa).

Glutamate 86 functions as the Proton donor/acceptor in the catalytic mechanism. Cysteine 118 acts as the Acyl-thioester intermediate in catalysis. 8 residues coordinate (3S)-3-hydroxy-3-methylglutaryl-CoA: cysteine 118, asparagine 156, threonine 160, serine 210, histidine 250, lysine 259, asparagine 327, and serine 361. The active-site Proton donor/acceptor is the histidine 250. The residue at position 398 (threonine 398) is a Phosphothreonine.

This sequence belongs to the thiolase-like superfamily. HMG-CoA synthase family.

It catalyses the reaction acetoacetyl-CoA + acetyl-CoA + H2O = (3S)-3-hydroxy-3-methylglutaryl-CoA + CoA + H(+). Its pathway is metabolic intermediate biosynthesis; (R)-mevalonate biosynthesis; (R)-mevalonate from acetyl-CoA: step 2/3. In terms of biological role, hydroxymethylglutaryl-CoA synthase; part of the first module of ergosterol biosynthesis pathway that includes the early steps of the pathway, conserved across all eukaryotes, and which results in the formation of mevalonate from acetyl-coenzyme A (acetyl-CoA). Hcs1 condenses acetyl-CoA with acetoacetyl-CoA to form hydroxymethylglutaryl-CoA (HMG-CoA). The first module starts with the action of the cytosolic acetyl-CoA acetyltransferase eg10 that catalyzes the formation of acetoacetyl-CoA. The hydroxymethylglutaryl-CoA synthases erg13 then condenses acetyl-CoA with acetoacetyl-CoA to form HMG-CoA. The rate-limiting step of the early module is the reduction to mevalonate by the 3-hydroxy-3-methylglutaryl-coenzyme A (HMG-CoA) reductases hcs1. This Schizosaccharomyces pombe (strain 972 / ATCC 24843) (Fission yeast) protein is Hydroxymethylglutaryl-CoA synthase.